The chain runs to 598 residues: Thiol:disulfide interchange protein DsbD (598 aa).

Residues 1–19 form the signal peptide; the sequence is MAYRIITLILLLCSTSATA. A disulfide bridge links cysteine 122 with cysteine 128. Positions 147 to 187 are disordered; that stretch reads DGQATAIEPMPSTSSRPAFNPPLPVEPRPAPELATSPAPAA. Positions 165 to 176 are enriched in pro residues; sequence FNPPLPVEPRPA. The next 7 helical transmembrane spans lie at 197–217, 242–262, 277–297, 330–350, 356–376, 391–411, and 423–443; these read LPFTALWALLIGIGIAFTPCV, LLAFIYVQGMALTYTALGLVV, YVLVGLSAVFILLALSMFGLF, IAGLICSPCTTAPLSAILLYI, LWLGGGTLYLYALGMGLPLIL, WMSHVKTAFGFVILALPVFLL, and LWSMLGVAFFSWAFITSLGAT. Cysteine 216 and cysteine 338 are oxidised to a cystine. The 140-residue stretch at 459 to 598 folds into the Thioredoxin domain; it reads LVSARPLQDW…FSAHLRDWQA (140 aa). A disulfide bridge connects residues cysteine 513 and cysteine 516.

Belongs to the thioredoxin family. DsbD subfamily.

Its subcellular location is the cell inner membrane. It catalyses the reaction [protein]-dithiol + NAD(+) = [protein]-disulfide + NADH + H(+). The enzyme catalyses [protein]-dithiol + NADP(+) = [protein]-disulfide + NADPH + H(+). Its function is as follows. Required to facilitate the formation of correct disulfide bonds in some periplasmic proteins and for the assembly of the periplasmic c-type cytochromes. Acts by transferring electrons from cytoplasmic thioredoxin to the periplasm. This transfer involves a cascade of disulfide bond formation and reduction steps. The polypeptide is Thiol:disulfide interchange protein DsbD (Klebsiella pneumoniae subsp. pneumoniae (strain ATCC 700721 / MGH 78578)).